The primary structure comprises 301 residues: GTPase Era (301 aa).

One can recognise an Era-type G domain in the interval 7-175; the sequence is YCGFIAIVGR…AGIVRKHLPE (169 aa). The interval 15-22 is G1; sequence GRPNVGKS. 15-22 serves as a coordination point for GTP; sequence GRPNVGKS. Positions 41-45 are G2; the sequence is QTTRH. Residues 62 to 65 form a G3 region; the sequence is DTPG. Residues 62 to 66 and 124 to 127 each bind GTP; these read DTPGL and NKVD. Residues 124-127 are G4; the sequence is NKVD. Positions 154-156 are G5; that stretch reads ISA. The KH type-2 domain maps to 206 to 283; that stretch reads LGAELPYSVT…HLELWVKVKS (78 aa).

The protein belongs to the TRAFAC class TrmE-Era-EngA-EngB-Septin-like GTPase superfamily. Era GTPase family. As to quaternary structure, monomer.

Its subcellular location is the cytoplasm. The protein localises to the cell inner membrane. In terms of biological role, an essential GTPase that binds both GDP and GTP, with rapid nucleotide exchange. Plays a role in 16S rRNA processing and 30S ribosomal subunit biogenesis and possibly also in cell cycle regulation and energy metabolism. This Salmonella agona (strain SL483) protein is GTPase Era.